The following is a 357-amino-acid chain: Protein RecA (357 aa).

Residue 79–86 (GPESSGKT) coordinates ATP.

The protein belongs to the RecA family.

It is found in the cytoplasm. In terms of biological role, can catalyze the hydrolysis of ATP in the presence of single-stranded DNA, the ATP-dependent uptake of single-stranded DNA by duplex DNA, and the ATP-dependent hybridization of homologous single-stranded DNAs. It interacts with LexA causing its activation and leading to its autocatalytic cleavage. The polypeptide is Protein RecA (Chloroherpeton thalassium (strain ATCC 35110 / GB-78)).